A 125-amino-acid polypeptide reads, in one-letter code: Small ribosomal subunit protein bS6 (125 aa).

Residues 99-125 form a disordered region; sequence PSIMMKSVEREEARKASTEASAPAQAQ. The span at 105–115 shows a compositional bias: basic and acidic residues; it reads SVEREEARKAS. A compositionally biased stretch (polar residues) spans 116–125; the sequence is TEASAPAQAQ.

It belongs to the bacterial ribosomal protein bS6 family.

Binds together with bS18 to 16S ribosomal RNA. This chain is Small ribosomal subunit protein bS6, found in Bordetella petrii (strain ATCC BAA-461 / DSM 12804 / CCUG 43448).